We begin with the raw amino-acid sequence, 297 residues long: MDRAQLRGMGVALITPFDEKGEVDHESLRLLADYQVAGGADYIVALGTTGESPTIEEAERSAILQTVREAVAGRCPIIVGAGGNYTERLVNRIQAMDKTGVDAILSVAPYYNKPTQEGIYRHYRTLAESTDTSIILYNVPGRTGVNIKSETTLRLATDCPNIIGIKEASGNVDQVRAIVLEKPDPFIVLSGDDHLSLSFIKEGAEGVISVIGNAYPELFSRLIHLCLENRFEEAETIQQRLEGMCYLMFVDGNPAGIKELLYQKGLIRHNILRLPLVSASDSTSTLIARVRNQIEQR.

A pyruvate-binding site is contributed by threonine 49. Tyrosine 137 serves as the catalytic Proton donor/acceptor. Residue lysine 166 is the Schiff-base intermediate with substrate of the active site. Pyruvate is bound at residue isoleucine 208.

It belongs to the DapA family. In terms of assembly, homotetramer; dimer of dimers.

The protein resides in the cytoplasm. The catalysed reaction is L-aspartate 4-semialdehyde + pyruvate = (2S,4S)-4-hydroxy-2,3,4,5-tetrahydrodipicolinate + H2O + H(+). It participates in amino-acid biosynthesis; L-lysine biosynthesis via DAP pathway; (S)-tetrahydrodipicolinate from L-aspartate: step 3/4. In terms of biological role, catalyzes the condensation of (S)-aspartate-beta-semialdehyde [(S)-ASA] and pyruvate to 4-hydroxy-tetrahydrodipicolinate (HTPA). This is 4-hydroxy-tetrahydrodipicolinate synthase from Porphyromonas gingivalis (strain ATCC 33277 / DSM 20709 / CIP 103683 / JCM 12257 / NCTC 11834 / 2561).